A 742-amino-acid polypeptide reads, in one-letter code: Phosphoribosylformylglycinamidine synthase subunit PurL (742 aa).

His54 is an active-site residue. 2 residues coordinate ATP: Tyr57 and Lys96. Glu98 lines the Mg(2+) pocket. Residues 99–102 (SHNH) and Arg121 each bind substrate. Residue His100 is the Proton acceptor of the active site. Asp122 is a binding site for Mg(2+). Positions 225 and 245 each coordinate substrate. Asp273 is a Mg(2+) binding site. 317–319 (ESQ) provides a ligand contact to substrate. Gly537 is a binding site for ATP. Residue Asn538 coordinates Mg(2+). Substrate is bound at residue Ser540.

The protein belongs to the FGAMS family. In terms of assembly, monomer. Part of the FGAM synthase complex composed of 1 PurL, 1 PurQ and 2 PurS subunits.

The protein localises to the cytoplasm. The enzyme catalyses N(2)-formyl-N(1)-(5-phospho-beta-D-ribosyl)glycinamide + L-glutamine + ATP + H2O = 2-formamido-N(1)-(5-O-phospho-beta-D-ribosyl)acetamidine + L-glutamate + ADP + phosphate + H(+). The catalysed reaction is L-glutamine + H2O = L-glutamate + NH4(+). The protein operates within purine metabolism; IMP biosynthesis via de novo pathway; 5-amino-1-(5-phospho-D-ribosyl)imidazole from N(2)-formyl-N(1)-(5-phospho-D-ribosyl)glycinamide: step 1/2. Its function is as follows. Part of the phosphoribosylformylglycinamidine synthase complex involved in the purines biosynthetic pathway. Catalyzes the ATP-dependent conversion of formylglycinamide ribonucleotide (FGAR) and glutamine to yield formylglycinamidine ribonucleotide (FGAM) and glutamate. The FGAM synthase complex is composed of three subunits. PurQ produces an ammonia molecule by converting glutamine to glutamate. PurL transfers the ammonia molecule to FGAR to form FGAM in an ATP-dependent manner. PurS interacts with PurQ and PurL and is thought to assist in the transfer of the ammonia molecule from PurQ to PurL. In Bacillus subtilis (strain 168), this protein is Phosphoribosylformylglycinamidine synthase subunit PurL.